We begin with the raw amino-acid sequence, 363 residues long: Palmitoyltransferase ZDHHC9 (363 aa).

Residues 1–35 are Cytoplasmic-facing; the sequence is MSVMVVRKKVTRKWEKLPGRNTFCCDGRVMMARQK. A helical membrane pass occupies residues 36–56; that stretch reads GIFYLTLFLILGTCTLFFAFE. The Lumenal portion of the chain corresponds to 57 to 63; sequence CRYLAVQ. Residues 64-84 traverse the membrane as a helical segment; it reads LSPAIPVFAAMLFLFSMATLL. Over 85-183 the chain is Cytoplasmic; it reads RTSFSDPGVI…NCVGKRNYRY (99 aa). Residues 139-189 form the DHHC domain; that stretch reads KYCYTCKIFRPPRASHCSICDNCVERFDHHCPWVGNCVGKRNYRYFYLFIL. Residue C169 is the S-palmitoyl cysteine intermediate of the active site. The helical transmembrane segment at 184 to 204 threads the bilayer; that stretch reads FYLFILSLSLLTIYVFAFNIV. Over 205–228 the chain is Lumenal; the sequence is YVALKSLKIGFLETLKETPGTVLE. The chain crosses the membrane as a helical span at residues 229 to 249; that stretch reads VLICFFTLWSVVGLTGFHTFL. Residues 250–363 are Cytoplasmic-facing; it reads VALNQTTNED…PPQEVTEAEK (114 aa). The segment at 303-363 is disordered; that stretch reads PLEESGSRPP…PPQEVTEAEK (61 aa). Positions 310-322 are enriched in polar residues; it reads RPPSTQEASTSLL. The segment covering 345-355 has biased composition (pro residues); sequence EMPPPEPPEPP.

This sequence belongs to the DHHC palmitoyltransferase family. ERF2/ZDHHC9 subfamily. In terms of assembly, interacts with GOLGA7.

The protein resides in the endoplasmic reticulum membrane. Its subcellular location is the golgi apparatus membrane. The enzyme catalyses L-cysteinyl-[protein] + hexadecanoyl-CoA = S-hexadecanoyl-L-cysteinyl-[protein] + CoA. In terms of biological role, palmitoyltransferase that catalyzes the addition of palmitate onto various protein substrates, such as ADRB2, GSDMD, HRAS, NRAS and CGAS. The ZDHHC9-GOLGA7 complex is a palmitoyltransferase specific for HRAS and NRAS. May have a palmitoyltransferase activity toward the beta-2 adrenergic receptor/ADRB2 and therefore regulate G protein-coupled receptor signaling. Acts as a regulator of innate immunity by catalyzing palmitoylation of CGAS, thereby promoting CGAS homodimerization and cyclic GMP-AMP synthase activity. Activates pyroptosis by catalyzing palmitoylation of gasdermin-D (GSDMD), thereby promoting membrane translocation and pore formation of GSDMD. The polypeptide is Palmitoyltransferase ZDHHC9 (ZDHHC9) (Bos taurus (Bovine)).